A 20-amino-acid chain; its full sequence is Superoxide dismutase [Mn], mitochondrial (20 aa).

The protein belongs to the iron/manganese superoxide dismutase family. In terms of assembly, homotetramer. Mn(2+) serves as cofactor.

It localises to the mitochondrion matrix. The enzyme catalyses 2 superoxide + 2 H(+) = H2O2 + O2. Destroys superoxide anion radicals which are normally produced within the cells and which are toxic to biological systems. This is Superoxide dismutase [Mn], mitochondrial (SODA) from Hordeum vulgare (Barley).